The following is a 150-amino-acid chain: Large ribosomal subunit protein uL13 (150 aa).

A disordered region spans residues 130–150 (EHPHGAQQPQPYQLNPSASIK). A compositionally biased stretch (polar residues) spans 136 to 150 (QQPQPYQLNPSASIK).

Belongs to the universal ribosomal protein uL13 family. Part of the 50S ribosomal subunit.

This protein is one of the early assembly proteins of the 50S ribosomal subunit, although it is not seen to bind rRNA by itself. It is important during the early stages of 50S assembly. The polypeptide is Large ribosomal subunit protein uL13 (Synechococcus sp. (strain RCC307)).